Consider the following 348-residue polypeptide: Erythronate-4-phosphate dehydrogenase (348 aa).

Residues Thr-46 and Thr-67 each coordinate substrate. Asp-147 provides a ligand contact to NAD(+). Residue Arg-209 is part of the active site. An NAD(+)-binding site is contributed by Asp-233. Glu-238 is a catalytic residue. Residue His-255 is the Proton donor of the active site. NAD(+) is bound at residue Gly-258. Tyr-259 provides a ligand contact to substrate.

It belongs to the D-isomer specific 2-hydroxyacid dehydrogenase family. PdxB subfamily. In terms of assembly, homodimer.

It localises to the cytoplasm. The enzyme catalyses 4-phospho-D-erythronate + NAD(+) = (R)-3-hydroxy-2-oxo-4-phosphooxybutanoate + NADH + H(+). The protein operates within cofactor biosynthesis; pyridoxine 5'-phosphate biosynthesis; pyridoxine 5'-phosphate from D-erythrose 4-phosphate: step 2/5. In terms of biological role, catalyzes the oxidation of erythronate-4-phosphate to 3-hydroxy-2-oxo-4-phosphonooxybutanoate. This Bacteroides thetaiotaomicron (strain ATCC 29148 / DSM 2079 / JCM 5827 / CCUG 10774 / NCTC 10582 / VPI-5482 / E50) protein is Erythronate-4-phosphate dehydrogenase.